We begin with the raw amino-acid sequence, 180 residues long: Large ribosomal subunit protein uL5 (180 aa).

The protein belongs to the universal ribosomal protein uL5 family. In terms of assembly, part of the 50S ribosomal subunit; part of the 5S rRNA/L5/L18/L25 subcomplex. Contacts the 5S rRNA and the P site tRNA. Forms a bridge to the 30S subunit in the 70S ribosome.

Its function is as follows. This is one of the proteins that bind and probably mediate the attachment of the 5S RNA into the large ribosomal subunit, where it forms part of the central protuberance. In the 70S ribosome it contacts protein S13 of the 30S subunit (bridge B1b), connecting the 2 subunits; this bridge is implicated in subunit movement. Contacts the P site tRNA; the 5S rRNA and some of its associated proteins might help stabilize positioning of ribosome-bound tRNAs. The protein is Large ribosomal subunit protein uL5 of Clostridium acetobutylicum (strain ATCC 824 / DSM 792 / JCM 1419 / IAM 19013 / LMG 5710 / NBRC 13948 / NRRL B-527 / VKM B-1787 / 2291 / W).